The following is a 484-amino-acid chain: uncharacterized protein (484 aa).

The region spanning 14 to 82 is the HTH gntR-type domain; it reads VPLHRQIEQY…KGGGTKVVNS (69 aa). A DNA-binding region (H-T-H motif) is located at residues 42–61; sequence QRTLADMFQVNRSTVTAAID. Lys327 is modified (N6-(pyridoxal phosphate)lysine).

It in the C-terminal section; belongs to the class-I pyridoxal-phosphate-dependent aminotransferase family. The cofactor is pyridoxal 5'-phosphate.

This is an uncharacterized protein from Bacillus subtilis (strain 168).